Reading from the N-terminus, the 335-residue chain is BTB and MATH domain-containing protein 39 (335 aa).

One can recognise an MATH domain in the interval 14-141 (MKTLCFKIMN…NGVFTIEFDL (128 aa)). Positions 161-226 (ADGKLIVEDQ…LQLDEFKVNV (66 aa)) constitute a BTB domain.

The polypeptide is BTB and MATH domain-containing protein 39 (Caenorhabditis briggsae).